The chain runs to 193 residues: V-type sodium ATPase subunit E (193 aa).

Belongs to the V-ATPase E subunit family. The N-terminus is blocked.

Its function is as follows. Involved in ATP-driven sodium extrusion. The polypeptide is V-type sodium ATPase subunit E (ntpE) (Enterococcus hirae (strain ATCC 9790 / DSM 20160 / JCM 8729 / LMG 6399 / NBRC 3181 / NCIMB 6459 / NCDO 1258 / NCTC 12367 / WDCM 00089 / R)).